The sequence spans 82 residues: MTNSPLSYKLIRRSAGNSYCQPSCEPTGRCARSCVHALLWRRTTTARHYSGHLRLAPRMYKRRRPDHMMKRNSPSYTGDHKT.

Residues 60–82 form a disordered region; the sequence is YKRRRPDHMMKRNSPSYTGDHKT.

This is an uncharacterized protein from Saccharomyces cerevisiae (strain ATCC 204508 / S288c) (Baker's yeast).